A 172-amino-acid polypeptide reads, in one-letter code: Protein GrpE (172 aa).

The interval 1–24 (MNQDHPEFDSEDLAQNPPETDPLK) is disordered.

The protein belongs to the GrpE family. In terms of assembly, homodimer.

It is found in the cytoplasm. Functionally, participates actively in the response to hyperosmotic and heat shock by preventing the aggregation of stress-denatured proteins, in association with DnaK and GrpE. It is the nucleotide exchange factor for DnaK and may function as a thermosensor. Unfolded proteins bind initially to DnaJ; upon interaction with the DnaJ-bound protein, DnaK hydrolyzes its bound ATP, resulting in the formation of a stable complex. GrpE releases ADP from DnaK; ATP binding to DnaK triggers the release of the substrate protein, thus completing the reaction cycle. Several rounds of ATP-dependent interactions between DnaJ, DnaK and GrpE are required for fully efficient folding. This chain is Protein GrpE, found in Xanthomonas oryzae pv. oryzae (strain PXO99A).